Reading from the N-terminus, the 2462-residue chain is MGPQTPSSEPPRPVTVFFGPVYPELTQSSSRIRQYLADKASAGWLDDTLQGLPSTWQDIMRQWPALKKIPGESLLRQLTQYLCRESSCPVGDTLNLLLVPVTVLRHIVEFQQLKDEKKHLEIRDVQGFCVGVLAAITASWEHDDAEFPKVVSTVLRVAVCIGALVDLDEVNGSSSKSMAVRWKTKCEYRHLGQVLERYKGYIACMIKTNGATVTVPTANYLSLAEELESHGISVKNLPLRGRFHTADHIPAMKQLLALCARDARFQLPIKKNLPLLPRSNVDGTRLPSNVLMAAAVESILAKQANWMLTVAEALNSEGPPDEKHAVVIGAGQIIPQRSLLASVEHIGDQMAPTDTSLHRPSPTIDIRPTAQCNGTSPETSTQAVSAPIAVTGFACRYPQADSVEALWTLLERGQCTVSSMPNHRLKADSLQRQPRGPFWGNYLESPESFDHRFFGVSAREAESMDPQQRLLLQVAYEAIESATYCGLRATKLPDDVGCYIGVGSDDYSQNVGSRDATAFSATGTLQAFNSGRISHFFGWSGPSITVDTACSSAAVAIHLACRALQANDCSIAVAGGVNVMTDPRWSQNLAAASFLSPTGASKAFDAAADGYCRGEGAGLLVLRPLDAALRDGDPIHAVITGTCVNQGANCSPITVPDSNSQRSLYMKALAQSGLHPDAVCYVEAHGTGTQVGDPIEYESIRCTFGGPQRTETVYIGSIKDNIGHTETSSGAAGMVKTILMIQKRRIPKQANFSCLNPRIVTHERDQIAIPTQSLEWKAAKRVALVTNYGAAGSNAVIVVKEPIKPGVDRSTWPARVPFIITAKTEESLREYCRELQHTLLAQQQGSGSATHHLAYNLAAKQNRCLEYQLSFSCEPAEVATRLQDIAAGRSKPTRCTAPSPPVVLCFGGQTGDTASISPTLVENCDILRSHLTQCDEVCHALGLPGLFPTIFSPEPRTDLVSLHCILFSIQYASAKAWLDCGLVVDRMIGHSFGQLTAICVAGGLSLIDGLRLVSKRAALIQEKWGPERGVMLSLKVTKTQVQELLCAASGTVDVACFNGPQSFVLAGNEKSIAQVETLCVQRGLEHHKKRLRNTHAFHSRLVEPLLPELSQVADTLDYSPLRIPVEACSEEPDHWARLTASKVVRHSREPVYFHPAVQRTLRHIPGPCVWLEAGSASPIVGMVRRVVKASGPGGEHTYLPIDLQESTAECNLADVTKVLWSKGVPVQFWAFHGSPAGYKWINLPPYQFSKTRHWIDYDPYAFHPTGALSEEEKHDDGLLQLVERDANGCLFRINNQDPAYRMCTEGHAVVDQNLCPASLYVEIVVRGAMTLSANGQAAAMAHIEALSISAPLVVDMPGSVCLSVTQIANNNDGGWMFSLFSQDGDRTPITHATGKVLLDPQAAGSAASARFHSLKRLLDPGQFDSIPKSPSSNGLKRATVYQAFRRAVNYADYYRGVEEVYAVGHRAAGRVLLPSSPTRMAACDPILMDNFLQVAGIHVNCLSETDEDEVFVCSSVGEVSLGSRYLNRDAATPQAWTVYSTYERESGKRVTCDVFALDEDRMLAVTIMSATFTSVSIQSLKRTLSRLNGHSSSLGQHEPQLQEKLAPAAHITVSDDHHLRAVQSMLGDLLGVSPGELPGNAPLAEIGVDSLMSTEVLAEVDKRFGVNITNTELADIADVRGLAHRISPSSSVVHVETSKESSVANDISVGGQQPIIESPPVTHQEDSPRFADRAITAFAATRGSTKYIDLTQFSAFCTSVYPQQMRLVTAYVAEAFQALGANLESMLPGQSIPSLAILPQHNQVLGQLIGVLEYAGLVEQKSTGLFRTGKPVDVGPSAVLHQTILGDYPQHASEHKLLRTTGARLAECLTGTADPLSLLFQDAQARALMQDVYSNAPMFKAATMQLAQYLQDLLLDSGCDREIEILEIGAGTGGTTAFLVSQLAAMPGVKFKYTFTDLSSSLVTLARKRFGSYSFMRYSTLDIEKMPRDELLGKYDIILSSNCIHATRSLAASCMHIRKMLRPHGLLCLIELTRNLPWFDLVFGLLGGWWLFNDGRSHALANESLWDTRLREAGFNWVDWTDNPLEESDILRLIVASPTMASPPLPVKQPITPARVETVRYGERAGVQLMADIYYPHTVDAKGTKRPIALLIHGGGHIMLSRKDIRPYQVDLLLDAGFLPVSIDYRLCPEVSLLEGPMPDVRDALAWARADLPRQSLSRTDIQPDGDRVVAVGWSTGGHLAMTLSWTAPEHGILPPQAILAFYSPTDYTDPFWTTPNFPYAGAVSEEDTKLTRPLDALRDSPITAYNPPANKHALGGWMAPSDPRSQIALYMNWTGQALPVLFNGCNYKKLAAAKGPTTSEVILPAPPLADVQRACPLSQIVAGRYKTPTFLIHGGLDDLIPVQQAERTQDAMRAAGVESTLRVVQGGLHLFDLGIDISAVDEDGPRAVREGYEFLRQHVAV.

The interval 16-253 (VFFGPVYPEL…HTADHIPAMK (238 aa)) is N-terminal acylcarrier protein transacylase domain (SAT). In terms of domain architecture, Ketosynthase family 3 (KS3) spans 385–801 (SAPIAVTGFA…GSNAVIVVKE (417 aa)). Residues Cys-550, His-685, and His-724 each act as for beta-ketoacyl synthase activity in the active site. A malonyl-CoA:ACP transacylase (MAT) domain region spans residues 904-1208 (LCFGGQTGDT…LPIDLQESTA (305 aa)). The active-site For acyl/malonyl transferase activity is the Ser-991. Residues 1274 to 1403 (HDDGLLQLVE…GKVLLDPQAA (130 aa)) are N-terminal hotdog fold. A PKS/mFAS DH domain is found at 1274–1581 (HDDGLLQLVE…FTSVSIQSLK (308 aa)). Residues 1277-1580 (GLLQLVERDA…TFTSVSIQSL (304 aa)) form a product template (PT) domain region. Residue His-1307 is the Proton acceptor; for dehydratase activity of the active site. Residues 1431-1581 (SSNGLKRATV…FTSVSIQSLK (151 aa)) are C-terminal hotdog fold. The active-site Proton donor; for dehydratase activity is Asp-1489. In terms of domain architecture, Carrier spans 1613 to 1690 (VSDDHHLRAV…GLAHRISPSS (78 aa)). The residue at position 1650 (Ser-1650) is an O-(pantetheine 4'-phosphoryl)serine. A methyltransferase (CMeT) domain region spans residues 1850–2083 (QHASEHKLLR…GFNWVDWTDN (234 aa)). The tract at residues 2112–2462 (TPARVETVRY…YEFLRQHVAV (351 aa)) is thioesterase (TE) domain. Residues Ser-2235, Asp-2398, and His-2430 each act as for thioesterase activity in the active site.

It catalyses the reaction 3 malonyl-CoA + acetyl-CoA + 2 S-adenosyl-L-methionine = 3,5-dimethylorsellinate + 2 S-adenosyl-L-homocysteine + 3 CO2 + 4 CoA. The protein operates within secondary metabolite biosynthesis; terpenoid biosynthesis. In terms of biological role, non-reducing polyketide synthase; part of the gene cluster that mediates the biosynthesis of calidodehydroaustin, a fungal meroterpenoid. The first step of the pathway is the synthesis of 3,5-dimethylorsellinic acid by the polyketide synthase ausA. 3,5-dimethylorsellinic acid is then prenylated by the polyprenyl transferase ausN. Further epoxidation by the FAD-dependent monooxygenase ausM and cyclization by the probable terpene cyclase ausL lead to the formation of protoaustinoid A. Protoaustinoid A is then oxidized to spiro-lactone preaustinoid A3 by the combined action of the FAD-binding monooxygenases ausB and ausC, and the dioxygenase ausE. Acid-catalyzed keto-rearrangement and ring contraction of the tetraketide portion of preaustinoid A3 by ausJ lead to the formation of preaustinoid A4. The aldo-keto reductase ausK, with the help of ausH, is involved in the next step by transforming preaustinoid A4 into isoaustinone which is in turn hydroxylated by the P450 monooxygenase ausI to form austinolide. The cytochrome P450 monooxygenase ausG modifies austinolide to austinol. Austinol is further acetylated to austin by the O-acetyltransferase ausP, which spontaneously changes to dehydroaustin. The cytochrome P450 monooxygenase ausR then converts dehydroaustin is into 7-dehydrodehydroaustin. The hydroxylation catalyzed by ausR permits the O-acetyltransferase ausQ to add an additional acetyl group to the molecule, leading to the formation of acetoxydehydroaustin. The short chain dehydrogenase ausT catalyzes the reduction of the double bond present between carbon atoms 1 and 2 to convert 7-dehydrodehydroaustin into 1,2-dihydro-7-hydroxydehydroaustin. AusQ catalyzes not only an acetylation reaction but also the addition of the PKS ausV diketide product to 1,2-dihydro-7-hydroxydehydroaustin, forming precalidodehydroaustin. Finally, the iron/alpha-ketoglutarate-dependent dioxygenase converts precalidodehydroaustin into calidodehydroaustin. The protein is Non-reducing polyketide synthase ausA of Aspergillus calidoustus.